Reading from the N-terminus, the 468-residue chain is Ribulose bisphosphate carboxylase large chain (468 aa).

Lys-5 carries the post-translational modification N6,N6,N6-trimethyllysine. Residues Asn-114 and Thr-164 each coordinate substrate. The active-site Proton acceptor is the Lys-166. Lys-168 provides a ligand contact to substrate. Lys-192, Asp-194, and Glu-195 together coordinate Mg(2+). Position 192 is an N6-carboxylysine (Lys-192). The active-site Proton acceptor is the His-285. Substrate contacts are provided by Arg-286, His-318, and Ser-370.

Belongs to the RuBisCO large chain family. Type I subfamily. In terms of assembly, heterohexadecamer of 8 large chains and 8 small chains; disulfide-linked. The disulfide link is formed within the large subunit homodimers. It depends on Mg(2+) as a cofactor. The disulfide bond which can form in the large chain dimeric partners within the hexadecamer appears to be associated with oxidative stress and protein turnover.

The protein localises to the plastid. It is found in the chloroplast. The enzyme catalyses 2 (2R)-3-phosphoglycerate + 2 H(+) = D-ribulose 1,5-bisphosphate + CO2 + H2O. It carries out the reaction D-ribulose 1,5-bisphosphate + O2 = 2-phosphoglycolate + (2R)-3-phosphoglycerate + 2 H(+). Functionally, ruBisCO catalyzes two reactions: the carboxylation of D-ribulose 1,5-bisphosphate, the primary event in carbon dioxide fixation, as well as the oxidative fragmentation of the pentose substrate in the photorespiration process. Both reactions occur simultaneously and in competition at the same active site. The sequence is that of Ribulose bisphosphate carboxylase large chain from Tecoma stans (Yellow bells).